A 191-amino-acid chain; its full sequence is Dephospho-CoA kinase (191 aa).

The 189-residue stretch at 3–191 (AIGITGSYAS…KLIKNLECQV (189 aa)) folds into the DPCK domain. 11-16 (ASGKTF) provides a ligand contact to ATP.

Belongs to the CoaE family.

The protein resides in the cytoplasm. The catalysed reaction is 3'-dephospho-CoA + ATP = ADP + CoA + H(+). It functions in the pathway cofactor biosynthesis; coenzyme A biosynthesis; CoA from (R)-pantothenate: step 5/5. Its function is as follows. Catalyzes the phosphorylation of the 3'-hydroxyl group of dephosphocoenzyme A to form coenzyme A. This chain is Dephospho-CoA kinase, found in Rickettsia typhi (strain ATCC VR-144 / Wilmington).